Reading from the N-terminus, the 935-residue chain is Dual 3',5'-cyclic-AMP and -GMP phosphodiesterase 11A (935 aa).

The segment at 41–125 (RHSSGQGASD…ASQKELRKSF (85 aa)) is disordered. Over residues 54–69 (ALAGASSLAQSSARGS) the composition is skewed to low complexity. Residues Ser-162, Ser-163, and Ser-239 each carry the phosphoserine modification. GAF domains follow at residues 217 to 370 (DLTS…GIAI) and 402 to 558 (DLEK…GLGI). Residue Ser-424 participates in 3',5'-cyclic GMP binding. One can recognise a PDEase domain in the interval 588–912 (SKAEVDKFKA…RKWEELHQKR (325 aa)). His-664 acts as the Proton donor in catalysis. Positions 668, 704, 705, and 816 each coordinate a divalent metal cation. The segment at 915-935 (VSAASPVPSSPSPAVAGEDRL) is disordered.

It belongs to the cyclic nucleotide phosphodiesterase family. It depends on a divalent metal cation as a cofactor. As to expression, isoform 1 is expressed in brain, heart, kidney and liver, but not in prostate. Isoform 2 is specifically expressed in testis. Isoform 3 is expressed in various tissues including brain, lung, skeletal muscle, spleen, testis and prostate.

It localises to the cytoplasm. Its subcellular location is the cytosol. It carries out the reaction 3',5'-cyclic GMP + H2O = GMP + H(+). The enzyme catalyses 3',5'-cyclic AMP + H2O = AMP + H(+). Inhibited by 3-isobutyl-1-methylxanthine (IBMX), zaprinast and dipyridamole. cGMP acts as an allosteric activator. Plays a role in signal transduction by regulating the intracellular concentration of cyclic nucleotides cAMP and cGMP. Catalyzes the hydrolysis of both cAMP and cGMP to 5'-AMP and 5'-GMP, respectively. The chain is Dual 3',5'-cyclic-AMP and -GMP phosphodiesterase 11A from Rattus norvegicus (Rat).